The chain runs to 663 residues: Protein THEMIS2 (663 aa).

2 CABIT regions span residues 2–237 (EPVP…TASS) and 238–515 (QHIH…EAEG). The tract at residues 545–663 (ASESQAPPPR…DMDDHDYEEI (119 aa)) is disordered. Positions 559–577 (QGINKKQQNIQSCKESSVK) are enriched in polar residues. Thr596 carries the phosphothreonine modification. Residues 621–641 (NPQTQNSVLSMKPKTSSSLGK) show a composition bias toward polar residues. Residues 653–663 (PDMDDHDYEEI) show a composition bias toward acidic residues. Tyr660 is subject to Phosphotyrosine.

This sequence belongs to the themis family. As to quaternary structure, interacts with VAV1. Interacts with LAT. Interacts constitutively with GRB2, LYN and PLCG2; these interactions increase the activation of PLCG2 and its downstream pathways following B cell receptor stimulation. Post-translationally, phosphorylation at Tyr-660 is induced by LPS. Phosphorylated by Src kinases (Lck or Fyn) following BCR engagement. Expressed in both developing and mature B-cells with high expression in immature, follicular and B1 B cells. Also expressed in macrophages and dendritic cells. Down-regulated in splenocytes of mice developing arthritis in a collagen-induced model, not in those of mice failing to develop the disease. Transiently down-regulated in splenocytes of mice infected with influenza virus.

The protein resides in the nucleus. It localises to the cytoplasm. In terms of biological role, may constitute a control point in macrophage inflammatory response, promoting LPS-induced TLR4-mediated TNF production. Determines the threshold for activation of B cells by low-affinity and low-avidity ligands via PLCG2 activation and its downstream pathways. The chain is Protein THEMIS2 from Mus musculus (Mouse).